Here is a 632-residue protein sequence, read N- to C-terminus: Epithelial sodium channel subunit alpha (632 aa).

Residues 1-49 (MTKEEKNEKEALIEFFSSYRELFEFFCSNTTIHGAIRLVCSRRNRMKTA) lie on the Cytoplasmic side of the membrane. A helical membrane pass occupies residues 50–70 (FWLVLFLVTFGLMYWQFGLLF). The Extracellular portion of the chain corresponds to 71–520 (GQYFSYPVSI…SQWSLWFGSS (450 aa)). 10 disulfide bridges follow: C97/C264, C189/C196, C241/C248, C355/C440, C377/C417, C377/C436, C381/C432, C390/C417, C390/C440, and C392/C406. A helical membrane pass occupies residues 521–541 (VLSVVEMLELVIDFVIIGVMI). Residues 542–632 (LLHRYYYKKA…YYEENGGRRN (91 aa)) are Cytoplasmic-facing. Over residues 612 to 622 (SRSSSMRSNRS) the composition is skewed to low complexity. A disordered region spans residues 612-632 (SRSSSMRSNRSYYEENGGRRN). The span at 623 to 632 (YYEENGGRRN) shows a compositional bias: basic and acidic residues.

The protein belongs to the amiloride-sensitive sodium channel (TC 1.A.6) family. SCNN1A subfamily. In terms of assembly, heterotrimer; containing an alpha/SCNN1A, a beta/SCNN1B and a gamma/SCNN1G subunit. Interacts with shroom1.

Its subcellular location is the apical cell membrane. The protein localises to the cell projection. It localises to the cilium. It is found in the cytoplasmic granule. The protein resides in the cytoplasm. Its subcellular location is the cytoplasmic vesicle. The protein localises to the secretory vesicle. It localises to the acrosome. It is found in the flagellum. It carries out the reaction Na(+)(in) = Na(+)(out). Its activity is regulated as follows. Originally identified and characterized by its inhibition by the diuretic drug amiloride. Its function is as follows. This is one of the three pore-forming subunits of the heterotrimeric epithelial sodium channel (ENaC), a critical regulator of sodium balance and fluid homeostasis. ENaC operates in epithelial tissues, where it mediates the electrodiffusion of sodium ions from extracellular fluid through the apical membrane of cells, with water following osmotically. It plays a key role in maintaining sodium homeostasis through electrogenic sodium reabsorption in the kidneys. The chain is Epithelial sodium channel subunit alpha from Xenopus laevis (African clawed frog).